A 558-amino-acid chain; its full sequence is Potassium-transporting ATPase potassium-binding subunit (558 aa).

Helical transmembrane passes span 1–21 (MEIILFLTMMVMITYVFSGYL), 66–86 (FNGFMGFITFVLLIVQQWLFL), 127–147 (MIVMTYLMFTSSASGYAVCIA), 166–186 (IVRFIVRVLLPLSCLISILLM), 245–265 (IWSNFIEMGSMMLLPMSMLFL), 281–301 (ALILFVAMFFIFIAILTLTMW), 327–347 (FGAGLSALFTVITTAFTTGSV), 354–374 (LTPIGGLGPMVLMMLNVVFGG), 377–397 (VGLMNLLIFVLLTVFICSLMV), 416–436 (IVLVFLIHPILILVFSALAFM), 482–502 (ISTGIIMLLSRYIPIILQLMI), and 531–551 (IVFIVLLSGLTFIPVLLLGPI).

Belongs to the KdpA family. The system is composed of three essential subunits: KdpA, KdpB and KdpC.

Its subcellular location is the cell membrane. Part of the high-affinity ATP-driven potassium transport (or Kdp) system, which catalyzes the hydrolysis of ATP coupled with the electrogenic transport of potassium into the cytoplasm. This subunit binds the extracellular potassium ions and delivers the ions to the membrane domain of KdpB through an intramembrane tunnel. The chain is Potassium-transporting ATPase potassium-binding subunit from Staphylococcus aureus (strain USA300).